The sequence spans 297 residues: MSKIRGLPPAIRDPGPGVELGVVDGLLCQLIHSPEFNLFSDSVVFESTFIQVTKQGNWMDAYERSATMILGVTSSVPSLPLPNILLMANVTWPHGPFSTCSTLGAPVITLSRILPLKYVELQIYDRTQRILRVRTVTEKIYYLRLHEKHPQAVFQFWIRLVKILQKGLSITTKDPRIQFTHCLVPKMSNSSTETATESSLPASSQNSEAIMLLAAERNSSSLLELSNRHQTSRDRHTDTATETDNSGNCKSTPLVASSASMPMRAALTHSLWEQEDSNENFLQAPVASSLGENLLGP.

A disordered region spans residues 226-257; that stretch reads SNRHQTSRDRHTDTATETDNSGNCKSTPLVAS. The span at 240-257 shows a compositional bias: polar residues; sequence ATETDNSGNCKSTPLVAS.

Belongs to the GARIN family. In terms of assembly, interacts (via N-terminus) with RAB2B (in GTP-bound form). Expressed in testis (at protein level).

It localises to the golgi apparatus. Functionally, RAB2B effector protein required for accurate acrosome formation and normal male fertility. In Mus musculus (Mouse), this protein is Golgi-associated RAB2 interactor protein 1A.